Consider the following 152-residue polypeptide: uncharacterized protein (152 aa).

This is an uncharacterized protein from Rickettsia prowazekii (strain Madrid E).